A 119-amino-acid polypeptide reads, in one-letter code: Ribonuclease P protein component (119 aa).

Belongs to the RnpA family. In terms of assembly, consists of a catalytic RNA component (M1 or rnpB) and a protein subunit.

It catalyses the reaction Endonucleolytic cleavage of RNA, removing 5'-extranucleotides from tRNA precursor.. Functionally, RNaseP catalyzes the removal of the 5'-leader sequence from pre-tRNA to produce the mature 5'-terminus. It can also cleave other RNA substrates such as 4.5S RNA. The protein component plays an auxiliary but essential role in vivo by binding to the 5'-leader sequence and broadening the substrate specificity of the ribozyme. The polypeptide is Ribonuclease P protein component (Photorhabdus laumondii subsp. laumondii (strain DSM 15139 / CIP 105565 / TT01) (Photorhabdus luminescens subsp. laumondii)).